We begin with the raw amino-acid sequence, 453 residues long: Homogentisate 1,2-dioxygenase (453 aa).

H306 serves as the catalytic Proton acceptor. Residues H349 and E355 each contribute to the Fe cation site. Homogentisate is bound by residues Y364 and H385. A Fe cation-binding site is contributed by H385.

It belongs to the homogentisate dioxygenase family. As to quaternary structure, hexamer; dimer of trimers. The cofactor is Fe cation.

It catalyses the reaction homogentisate + O2 = 4-maleylacetoacetate + H(+). The protein operates within amino-acid degradation; L-phenylalanine degradation; acetoacetate and fumarate from L-phenylalanine: step 4/6. Its function is as follows. Involved in the catabolism of homogentisate (2,5-dihydroxyphenylacetate or 2,5-OH-PhAc), a central intermediate in the degradation of phenylalanine and tyrosine. Catalyzes the oxidative ring cleavage of the aromatic ring of homogentisate to yield maleylacetoacetate. This chain is Homogentisate 1,2-dioxygenase, found in Rhizobium leguminosarum bv. trifolii (strain WSM2304).